A 458-amino-acid chain; its full sequence is Bifunctional protein GlmU (458 aa).

The pyrophosphorylase stretch occupies residues 1 to 229 (MNKFAIVLAA…FDESLGVNDR (229 aa)). Residues 8–11 (LAAG), K22, Q72, and 77–78 (GT) each bind UDP-N-acetyl-alpha-D-glucosamine. Residue D102 participates in Mg(2+) binding. UDP-N-acetyl-alpha-D-glucosamine contacts are provided by G139, E154, N169, and N227. Position 227 (N227) interacts with Mg(2+). A linker region spans residues 230–250 (VALSQAEGTMRKRINHEHMVN). The tract at residues 251-458 (GVTLIDPATT…AKKMPHYRGQ (208 aa)) is N-acetyltransferase. Positions 332 and 350 each coordinate UDP-N-acetyl-alpha-D-glucosamine. H362 functions as the Proton acceptor in the catalytic mechanism. 2 residues coordinate UDP-N-acetyl-alpha-D-glucosamine: Y365 and N376. A379, S404, A422, and R439 together coordinate acetyl-CoA.

It in the N-terminal section; belongs to the N-acetylglucosamine-1-phosphate uridyltransferase family. This sequence in the C-terminal section; belongs to the transferase hexapeptide repeat family. As to quaternary structure, homotrimer. The cofactor is Mg(2+).

It localises to the cytoplasm. It carries out the reaction alpha-D-glucosamine 1-phosphate + acetyl-CoA = N-acetyl-alpha-D-glucosamine 1-phosphate + CoA + H(+). It catalyses the reaction N-acetyl-alpha-D-glucosamine 1-phosphate + UTP + H(+) = UDP-N-acetyl-alpha-D-glucosamine + diphosphate. The protein operates within nucleotide-sugar biosynthesis; UDP-N-acetyl-alpha-D-glucosamine biosynthesis; N-acetyl-alpha-D-glucosamine 1-phosphate from alpha-D-glucosamine 6-phosphate (route II): step 2/2. It functions in the pathway nucleotide-sugar biosynthesis; UDP-N-acetyl-alpha-D-glucosamine biosynthesis; UDP-N-acetyl-alpha-D-glucosamine from N-acetyl-alpha-D-glucosamine 1-phosphate: step 1/1. It participates in bacterial outer membrane biogenesis; LPS lipid A biosynthesis. In terms of biological role, catalyzes the last two sequential reactions in the de novo biosynthetic pathway for UDP-N-acetylglucosamine (UDP-GlcNAc). The C-terminal domain catalyzes the transfer of acetyl group from acetyl coenzyme A to glucosamine-1-phosphate (GlcN-1-P) to produce N-acetylglucosamine-1-phosphate (GlcNAc-1-P), which is converted into UDP-GlcNAc by the transfer of uridine 5-monophosphate (from uridine 5-triphosphate), a reaction catalyzed by the N-terminal domain. This chain is Bifunctional protein GlmU, found in Lactococcus lactis subsp. cremoris (strain SK11).